The chain runs to 315 residues: Transcription repressor OFP7 (315 aa).

Positions Tyr-113–Arg-183 are disordered. Basic residues predominate over residues Arg-130–Gly-145. Over residues Leu-160 to Glu-174 the composition is skewed to polar residues. The OVATE domain occupies Val-230 to Ala-289.

As to expression, expressed in roots, shoots, stems, flower buds and siliques.

It is found in the nucleus. Functionally, transcriptional repressor that regulates multiple aspects of plant growth and development through the regulation of BEL1-LIKE (BLH) and KNOX TALE (KNAT) homeodomain transcription factors. In Arabidopsis thaliana (Mouse-ear cress), this protein is Transcription repressor OFP7 (OFP7).